The following is an 88-amino-acid chain: MATKKGASSSSNGRDSEAKRLGVKRFGGQQVNAGEILVRQRGTKFHPGENVGRGGDDTLFALKTGAVQFSTKRNRRMVNIVENEAVDA.

Positions 1 to 13 (MATKKGASSSSNG) are enriched in polar residues. The disordered stretch occupies residues 1 to 25 (MATKKGASSSSNGRDSEAKRLGVKR).

The protein belongs to the bacterial ribosomal protein bL27 family.

In Corynebacterium efficiens (strain DSM 44549 / YS-314 / AJ 12310 / JCM 11189 / NBRC 100395), this protein is Large ribosomal subunit protein bL27.